The sequence spans 672 residues: NADPH-Fe(3+) oxidoreductase subunit beta (672 aa).

Residues C203, C207, C211, and C215 each contribute to the [4Fe-4S] cluster site. K254–E283 is an FAD binding site. NADP(+) is bound at residue G388–R421. T552 to D562 contacts FAD.

As to quaternary structure, heterotetramer with 2 alpha subunits. It depends on [4Fe-4S] cluster as a cofactor. The cofactor is FAD.

Its subcellular location is the cell membrane. In terms of biological role, probably involved in acetate metabolism and not in the reduction of Fe(3+) chelates. May serve as a major route for NADP regeneration. In Geobacter sulfurreducens (strain DL-1 / KN400), this protein is NADPH-Fe(3+) oxidoreductase subunit beta (sfrB).